Reading from the N-terminus, the 303-residue chain is Mycothiol acetyltransferase (303 aa).

N-acetyltransferase domains lie at 3–152 (VTVT…VSLP) and 155–303 (VRIR…MYRS). Asp35 provides a ligand contact to 1D-myo-inositol 2-(L-cysteinylamino)-2-deoxy-alpha-D-glucopyranoside. 79–81 (LTV) serves as a coordination point for acetyl-CoA. Residues Glu182, Lys224, and Glu237 each contribute to the 1D-myo-inositol 2-(L-cysteinylamino)-2-deoxy-alpha-D-glucopyranoside site. Acetyl-CoA-binding positions include 241–243 (VGV) and 248–254 (QGSGLGR). Position 275 (Tyr275) interacts with 1D-myo-inositol 2-(L-cysteinylamino)-2-deoxy-alpha-D-glucopyranoside.

The protein belongs to the acetyltransferase family. MshD subfamily. As to quaternary structure, monomer.

The catalysed reaction is 1D-myo-inositol 2-(L-cysteinylamino)-2-deoxy-alpha-D-glucopyranoside + acetyl-CoA = mycothiol + CoA + H(+). Catalyzes the transfer of acetyl from acetyl-CoA to desacetylmycothiol (Cys-GlcN-Ins) to form mycothiol. This is Mycothiol acetyltransferase from Kocuria rhizophila (strain ATCC 9341 / DSM 348 / NBRC 103217 / DC2201).